A 321-amino-acid chain; its full sequence is MPAPVPPTAFAQPSGPATQLVLGSMQRAPEYQALLTSLKSAAPPSSSVQGEMVDRILDNATTLPPPPLTIHLVLPLPLPPNLLSAIPPSTQIFIHIPADSESQLGALHSALASHSFTPVLPTPSPSTLAYTSPSAPSLPTVASDPSPAPSSSTPVTLSGARPLQLRRNGDKARKAALWAIDSPLIPDGGKSLLTPADRTRPDCVFPAENGKPVKRRRACKDCTCGLKELEQEEEAQTSAAVQEAQKAFFLEGDDDIPENLKKATEGMEGIWPADKRAEAKKTSSCGSCYLGDAFRCSSCPYLGLPPFKPGEQVQVSIGDDI.

The tract at residues 1–161 (MPAPVPPTAF…STPVTLSGAR (161 aa)) is N-terminal SAM-like domain. Residues 123–168 (PSPSTLAYTSPSAPSLPTVASDPSPAPSSSTPVTLSGARPLQLRRN) are disordered. Residues 139-156 (PTVASDPSPAPSSSTPVT) are compositionally biased toward low complexity. Residues 162-197 (PLQLRRNGDKARKAALWAIDSPLIPDGGKSLLTPAD) form a linker region. Cysteine 203, cysteine 219, cysteine 222, and cysteine 224 together coordinate [2Fe-2S] cluster. A fe-S binding site A region spans residues 203–224 (CVFPAENGKPVKRRRACKDCTC). 4 residues coordinate [4Fe-4S] cluster: cysteine 285, cysteine 288, cysteine 296, and cysteine 299. 2 consecutive short sequence motifs (cx2C motif) follow at residues 285–288 (CGSC) and 296–299 (CSSC). A fe-S binding site B region spans residues 285-299 (CGSCYLGDAFRCSSC).

Belongs to the anamorsin family. Monomer. Interacts with TAH18. Interacts with MIA40. [2Fe-2S] cluster serves as cofactor. The cofactor is [4Fe-4S] cluster.

The protein resides in the cytoplasm. Its subcellular location is the mitochondrion intermembrane space. Functionally, component of the cytosolic iron-sulfur (Fe-S) protein assembly (CIA) machinery required for the maturation of extramitochondrial Fe-S proteins. Part of an electron transfer chain functioning in an early step of cytosolic Fe-S biogenesis, facilitating the de novo assembly of a [4Fe-4S] cluster on the scaffold complex CFD1-NBP35. Electrons are transferred to DRE2 from NADPH via the FAD- and FMN-containing protein TAH18. TAH18-DRE2 are also required for the assembly of the diferric tyrosyl radical cofactor of ribonucleotide reductase (RNR), probably by providing electrons for reduction during radical cofactor maturation in the catalytic small subunit RNR2. The chain is Fe-S cluster assembly protein DRE2 from Cryptococcus neoformans var. neoformans serotype D (strain B-3501A) (Filobasidiella neoformans).